A 397-amino-acid chain; its full sequence is MLAQSCCLRLLILLLLFTTIGSVPKKSLKYFTNRKLRERRIKLFGTKKTEIQSLLISTWNYTDANLQAWSVLQQGPRRTRQAVIQGCMACQNQRCGRLLTGRSSPDTEGALTLEAAIMDGESLEYGAVAGMNGVRNAILVADAVLKYTKHSVLVGKSATKFARSLGYKEEYLTDARTRNVLKKWRSNGCQPNFWRDVHPSPAENCGPYSPLPEHMHQHPMHQEYAIIQGQHDQLAFLALDAEGKFHVASQSSGAQFRIPGRVGDSAVPGAGIYADNEVGGAVASGDGDVLMRHLPAFLAVEAMRAGKEPDKAAELVVQRLLRHNTEFNGAVVVVNRRGIYAAACAGLDEFHFVVSGGKEYLSMARVERVKCLERENEVIDGGPKGLFPTIPEKHKVP.

An N-terminal signal peptide occupies residues 1–22 (MLAQSCCLRLLILLLLFTTIGS). 3 disulfide bridges follow: Cys-90-Cys-95, Cys-189-Cys-205, and Cys-344-Cys-371.

The protein belongs to the Ntn-hydrolase family.

This chain is L-asparaginase-like protein CG4372, found in Drosophila melanogaster (Fruit fly).